Consider the following 362-residue polypeptide: Phosphoserine aminotransferase (362 aa).

L-glutamate-binding residues include Ser-9 and Arg-42. Residues 76-77, Trp-102, Thr-153, Asp-174, and Gln-197 each bind pyridoxal 5'-phosphate; that span reads GR. At Lys-198 the chain carries N6-(pyridoxal phosphate)lysine. 239–240 serves as a coordination point for pyridoxal 5'-phosphate; sequence NT.

It belongs to the class-V pyridoxal-phosphate-dependent aminotransferase family. SerC subfamily. As to quaternary structure, homodimer. Pyridoxal 5'-phosphate is required as a cofactor.

The protein resides in the cytoplasm. It catalyses the reaction O-phospho-L-serine + 2-oxoglutarate = 3-phosphooxypyruvate + L-glutamate. The catalysed reaction is 4-(phosphooxy)-L-threonine + 2-oxoglutarate = (R)-3-hydroxy-2-oxo-4-phosphooxybutanoate + L-glutamate. It participates in amino-acid biosynthesis; L-serine biosynthesis; L-serine from 3-phospho-D-glycerate: step 2/3. Its pathway is cofactor biosynthesis; pyridoxine 5'-phosphate biosynthesis; pyridoxine 5'-phosphate from D-erythrose 4-phosphate: step 3/5. In terms of biological role, catalyzes the reversible conversion of 3-phosphohydroxypyruvate to phosphoserine and of 3-hydroxy-2-oxo-4-phosphonooxybutanoate to phosphohydroxythreonine. This Escherichia coli O1:K1 / APEC protein is Phosphoserine aminotransferase.